The sequence spans 405 residues: 4-hydroxy-3-methylbut-2-en-1-yl diphosphate synthase (flavodoxin) (405 aa).

Positions 297, 300, 343, and 350 each coordinate [4Fe-4S] cluster.

This sequence belongs to the IspG family. Requires [4Fe-4S] cluster as cofactor.

The enzyme catalyses (2E)-4-hydroxy-3-methylbut-2-enyl diphosphate + oxidized [flavodoxin] + H2O + 2 H(+) = 2-C-methyl-D-erythritol 2,4-cyclic diphosphate + reduced [flavodoxin]. It functions in the pathway isoprenoid biosynthesis; isopentenyl diphosphate biosynthesis via DXP pathway; isopentenyl diphosphate from 1-deoxy-D-xylulose 5-phosphate: step 5/6. In terms of biological role, converts 2C-methyl-D-erythritol 2,4-cyclodiphosphate (ME-2,4cPP) into 1-hydroxy-2-methyl-2-(E)-butenyl 4-diphosphate. The chain is 4-hydroxy-3-methylbut-2-en-1-yl diphosphate synthase (flavodoxin) from Francisella tularensis subsp. novicida (strain U112).